The following is a 364-amino-acid chain: Spermidine/putrescine import ATP-binding protein PotA (364 aa).

The ABC transporter domain maps to 5–235 (LSFKGVTKGF…PVNRFVADFI (231 aa)). 37–44 (GPSGCGKT) contributes to the ATP binding site.

The protein belongs to the ABC transporter superfamily. Spermidine/putrescine importer (TC 3.A.1.11.1) family. The complex is composed of two ATP-binding proteins (PotA), two transmembrane proteins (PotB and PotC) and a solute-binding protein (PotD).

It is found in the cell membrane. The catalysed reaction is ATP + H2O + polyamine-[polyamine-binding protein]Side 1 = ADP + phosphate + polyamineSide 2 + [polyamine-binding protein]Side 1.. Functionally, part of the ABC transporter complex PotABCD involved in spermidine/putrescine import. Responsible for energy coupling to the transport system. The protein is Spermidine/putrescine import ATP-binding protein PotA of Staphylococcus haemolyticus (strain JCSC1435).